A 79-amino-acid polypeptide reads, in one-letter code: Acyl carrier protein (79 aa).

In terms of domain architecture, Carrier spans 2 to 77 (DNIEQRVKKI…QAIDYATAHV (76 aa)). O-(pantetheine 4'-phosphoryl)serine is present on Ser37.

This sequence belongs to the acyl carrier protein (ACP) family. In terms of processing, 4'-phosphopantetheine is transferred from CoA to a specific serine of apo-ACP by AcpS. This modification is essential for activity because fatty acids are bound in thioester linkage to the sulfhydryl of the prosthetic group.

The protein localises to the cytoplasm. Its pathway is lipid metabolism; fatty acid biosynthesis. In terms of biological role, carrier of the growing fatty acid chain in fatty acid biosynthesis. In Cupriavidus pinatubonensis (strain JMP 134 / LMG 1197) (Cupriavidus necator (strain JMP 134)), this protein is Acyl carrier protein.